The primary structure comprises 1087 residues: Exportin-7-B (1087 aa).

In terms of domain architecture, Importin N-terminal spans 30–96; the sequence is AEKALVEFTN…RNYVLTYLAT (67 aa).

Belongs to the exportin family.

The protein localises to the cytoplasm. The protein resides in the nucleus. Mediates the nuclear export of proteins (cargos) with broad substrate specificity. In Xenopus laevis (African clawed frog), this protein is Exportin-7-B (xpo7-b).